A 183-amino-acid chain; its full sequence is Beta-defensin 129 (183 aa).

An N-terminal signal peptide occupies residues methionine 1–threonine 19. Cystine bridges form between cysteine 27-cysteine 53, cysteine 34-cysteine 48, and cysteine 38-cysteine 54. The interval threonine 141 to glutamine 183 is disordered. Positions proline 161 to leucine 170 are enriched in pro residues.

The protein belongs to the beta-defensin family.

The protein localises to the secreted. Its function is as follows. Has antibacterial activity. The chain is Beta-defensin 129 (DEFB129) from Gorilla gorilla gorilla (Western lowland gorilla).